A 512-amino-acid chain; its full sequence is Probable pectinesterase/pectinesterase inhibitor 54 (512 aa).

The first 24 residues, 1 to 24, serve as a signal peptide directing secretion; that stretch reads MGVIDMVLFWVLLVNALLIVDASS. Residues 29 to 193 form a pectinesterase inhibitor 54 region; sequence FAYQNEMQRH…SRLVSNSLTL (165 aa). 2 N-linked (GlcNAc...) asparagine glycosylation sites follow: Asn71 and Asn131. The interval 229–496 is pectinesterase 54; the sequence is HVVVAKDGSG…FSVVKRRNGE (268 aa). A substrate-binding site is contributed by Gln302. The active-site Proton donor; for pectinesterase activity is the Asp325. Cys339 and Cys359 are disulfide-bonded. Asp346 acts as the Nucleophile; for pectinesterase activity in catalysis. Residues Arg415 and Trp417 each contribute to the substrate site.

This sequence in the N-terminal section; belongs to the PMEI family. In the C-terminal section; belongs to the pectinesterase family. As to expression, expressed in siliques.

The protein localises to the secreted. It localises to the cell wall. The catalysed reaction is [(1-&gt;4)-alpha-D-galacturonosyl methyl ester](n) + n H2O = [(1-&gt;4)-alpha-D-galacturonosyl](n) + n methanol + n H(+). Its pathway is glycan metabolism; pectin degradation; 2-dehydro-3-deoxy-D-gluconate from pectin: step 1/5. In terms of biological role, acts in the modification of cell walls via demethylesterification of cell wall pectin. This chain is Probable pectinesterase/pectinesterase inhibitor 54 (PME54), found in Arabidopsis thaliana (Mouse-ear cress).